Consider the following 733-residue polypeptide: 1,4-alpha-glucan branching enzyme GlgB (733 aa).

Asp412 (nucleophile) is an active-site residue. The Proton donor role is filled by Glu467.

The protein belongs to the glycosyl hydrolase 13 family. GlgB subfamily. Monomer.

The catalysed reaction is Transfers a segment of a (1-&gt;4)-alpha-D-glucan chain to a primary hydroxy group in a similar glucan chain.. The protein operates within glycan biosynthesis; glycogen biosynthesis. Catalyzes the formation of the alpha-1,6-glucosidic linkages in glycogen by scission of a 1,4-alpha-linked oligosaccharide from growing alpha-1,4-glucan chains and the subsequent attachment of the oligosaccharide to the alpha-1,6 position. In Burkholderia vietnamiensis (strain G4 / LMG 22486) (Burkholderia cepacia (strain R1808)), this protein is 1,4-alpha-glucan branching enzyme GlgB.